The primary structure comprises 189 residues: uncharacterized protein (189 aa).

Transmembrane regions (helical) follow at residues 4–21 (AISTVLYVLIPFLVFLFR), 34–56 (AFYPFHLFLPMIVVFITGIPLIL), 79–101 (LLVIDTMLFQIMLLQPFITLIYS), 122–144 (RILSSLFAFVIAGIALPEIVLLN), and 148–170 (ILHVDYLFFVHLIASSVFANLLV).

It localises to the cell membrane. This is an uncharacterized protein from Archaeoglobus fulgidus (strain ATCC 49558 / DSM 4304 / JCM 9628 / NBRC 100126 / VC-16).